The following is a 176-amino-acid chain: NAD(P)H-quinone oxidoreductase subunit 6, chloroplastic (176 aa).

The next 5 membrane-spanning stretches (helical) occupy residues 10–30, 32–52, 63–83, 92–112, and 152–172; these read FLLV…VLLT, PIFS…LYIL, LLIY…FMNG, LWTV…ISLI, and FFLP…GAIV.

The protein belongs to the complex I subunit 6 family. In terms of assembly, NDH is composed of at least 16 different subunits, 5 of which are encoded in the nucleus.

The protein resides in the plastid. It localises to the chloroplast thylakoid membrane. It catalyses the reaction a plastoquinone + NADH + (n+1) H(+)(in) = a plastoquinol + NAD(+) + n H(+)(out). It carries out the reaction a plastoquinone + NADPH + (n+1) H(+)(in) = a plastoquinol + NADP(+) + n H(+)(out). Functionally, NDH shuttles electrons from NAD(P)H:plastoquinone, via FMN and iron-sulfur (Fe-S) centers, to quinones in the photosynthetic chain and possibly in a chloroplast respiratory chain. The immediate electron acceptor for the enzyme in this species is believed to be plastoquinone. Couples the redox reaction to proton translocation, and thus conserves the redox energy in a proton gradient. The protein is NAD(P)H-quinone oxidoreductase subunit 6, chloroplastic (ndhG) of Lotus japonicus (Lotus corniculatus var. japonicus).